The sequence spans 143 residues: Small ribosomal subunit protein uS12 (143 aa).

It belongs to the universal ribosomal protein uS12 family. Component of the 40S small ribosomal subunit.

The protein localises to the cytoplasm. Its subcellular location is the cytosol. It localises to the rough endoplasmic reticulum. The protein is Small ribosomal subunit protein uS12 (rps23) of Gillichthys mirabilis (Long-jawed mudsucker).